The sequence spans 128 residues: UPF0102 protein MAV_3752 (128 aa).

It belongs to the UPF0102 family.

This chain is UPF0102 protein MAV_3752, found in Mycobacterium avium (strain 104).